The chain runs to 264 residues: Thymidylate synthase (264 aa).

Position 21 (Arg-21) interacts with dUMP. (6R)-5,10-methylene-5,6,7,8-tetrahydrofolate is bound at residue His-51. 126-127 (RR) contacts dUMP. The active-site Nucleophile is Cys-146. DUMP-binding positions include 166 to 169 (RSVD), Asn-177, and 207 to 209 (HLY). Asp-169 provides a ligand contact to (6R)-5,10-methylene-5,6,7,8-tetrahydrofolate. Ala-263 lines the (6R)-5,10-methylene-5,6,7,8-tetrahydrofolate pocket.

It belongs to the thymidylate synthase family. Bacterial-type ThyA subfamily. Homodimer.

Its subcellular location is the cytoplasm. The catalysed reaction is dUMP + (6R)-5,10-methylene-5,6,7,8-tetrahydrofolate = 7,8-dihydrofolate + dTMP. The protein operates within pyrimidine metabolism; dTTP biosynthesis. Catalyzes the reductive methylation of 2'-deoxyuridine-5'-monophosphate (dUMP) to 2'-deoxythymidine-5'-monophosphate (dTMP) while utilizing 5,10-methylenetetrahydrofolate (mTHF) as the methyl donor and reductant in the reaction, yielding dihydrofolate (DHF) as a by-product. This enzymatic reaction provides an intracellular de novo source of dTMP, an essential precursor for DNA biosynthesis. The sequence is that of Thymidylate synthase from Geobacillus thermodenitrificans (strain NG80-2).